A 507-amino-acid chain; its full sequence is Maturase K (507 aa).

Belongs to the intron maturase 2 family. MatK subfamily.

Its subcellular location is the plastid. It is found in the chloroplast. Usually encoded in the trnK tRNA gene intron. Probably assists in splicing its own and other chloroplast group II introns. This Euryale ferox (Gorgon plant) protein is Maturase K.